Reading from the N-terminus, the 278-residue chain is Complement C1q tumor necrosis factor-related protein 6 (278 aa).

The first 46 residues, 1-46, serve as a signal peptide directing secretion; the sequence is MQWLRVRESPGEATGHRVTMGTAALGPVWAALLLFLLMCEIPMVEL. An N-linked (GlcNAc...) asparagine glycan is attached at asparagine 91. Positions 97–138 constitute a Collagen-like domain; it reads GDKGDPGPMGLPGYMGREGPQGEPGPQGSKGDKGEMGSPGAP. Residues 99–135 form a disordered region; the sequence is KGDPGPMGLPGYMGREGPQGEPGPQGSKGDKGEMGSP. Positions 139–259 constitute a C1q domain; sequence CQKRFFAFSV…KRQRENAIYS (121 aa).

The protein resides in the secreted. The protein is Complement C1q tumor necrosis factor-related protein 6 (C1QTNF6) of Homo sapiens (Human).